The following is a 308-amino-acid chain: tRNA pseudouridine synthase B (308 aa).

The Nucleophile role is filled by aspartate 33.

This sequence belongs to the pseudouridine synthase TruB family. Type 1 subfamily.

It carries out the reaction uridine(55) in tRNA = pseudouridine(55) in tRNA. Responsible for synthesis of pseudouridine from uracil-55 in the psi GC loop of transfer RNAs. This chain is tRNA pseudouridine synthase B, found in Nitrosomonas europaea (strain ATCC 19718 / CIP 103999 / KCTC 2705 / NBRC 14298).